The primary structure comprises 147 residues: Myoglobin (147 aa).

In terms of domain architecture, Globin spans 2-141 (ADFDAVLKFW…FIADMDANYK (140 aa)). A nitrite-binding site is contributed by H60. H60 contributes to the O2 binding site. A heme b-binding site is contributed by H89.

It belongs to the globin family. In terms of assembly, monomeric.

Its subcellular location is the cytoplasm. It is found in the sarcoplasm. The catalysed reaction is Fe(III)-heme b-[protein] + nitric oxide + H2O = Fe(II)-heme b-[protein] + nitrite + 2 H(+). It carries out the reaction H2O2 + AH2 = A + 2 H2O. Its function is as follows. Monomeric heme protein which primary function is to store oxygen and facilitate its diffusion within muscle tissues. Reversibly binds oxygen through a pentacoordinated heme iron and enables its timely and efficient release as needed during periods of heightened demand. Depending on the oxidative conditions of tissues and cells, and in addition to its ability to bind oxygen, it also has a nitrite reductase activity whereby it regulates the production of bioactive nitric oxide. Under stress conditions, like hypoxia and anoxia, it also protects cells against reactive oxygen species thanks to its pseudoperoxidase activity. The protein is Myoglobin (mb) of Scomber japonicus (Chub mackerel).